Reading from the N-terminus, the 56-residue chain is Small ribosomal subunit protein uS14B (56 aa).

2 residues coordinate Zn(2+): Cys21 and Cys24. Phosphoserine is present on Ser25. Zn(2+) contacts are provided by Cys39 and Cys42.

It belongs to the universal ribosomal protein uS14 family. Component of the small ribosomal subunit (SSU). Mature yeast ribosomes consist of a small (40S) and a large (60S) subunit. The 40S small subunit contains 1 molecule of ribosomal RNA (18S rRNA) and 33 different proteins (encoded by 57 genes). The large 60S subunit contains 3 rRNA molecules (25S, 5.8S and 5S rRNA) and 46 different proteins (encoded by 81 genes). Zn(2+) is required as a cofactor.

The protein resides in the cytoplasm. Component of the ribosome, a large ribonucleoprotein complex responsible for the synthesis of proteins in the cell. The small ribosomal subunit (SSU) binds messenger RNAs (mRNAs) and translates the encoded message by selecting cognate aminoacyl-transfer RNA (tRNA) molecules. The large subunit (LSU) contains the ribosomal catalytic site termed the peptidyl transferase center (PTC), which catalyzes the formation of peptide bonds, thereby polymerizing the amino acids delivered by tRNAs into a polypeptide chain. The nascent polypeptides leave the ribosome through a tunnel in the LSU and interact with protein factors that function in enzymatic processing, targeting, and the membrane insertion of nascent chains at the exit of the ribosomal tunnel. The polypeptide is Small ribosomal subunit protein uS14B (Saccharomyces cerevisiae (strain ATCC 204508 / S288c) (Baker's yeast)).